The chain runs to 81 residues: Sulfur carrier protein TusA (81 aa).

C19 (cysteine persulfide intermediate) is an active-site residue.

This sequence belongs to the sulfur carrier protein TusA family. As to quaternary structure, interacts with IscS.

The protein resides in the cytoplasm. It functions in the pathway tRNA modification. Sulfur carrier protein involved in sulfur trafficking in the cell. Part of a sulfur-relay system required for 2-thiolation during synthesis of 2-thiouridine of the modified wobble base 5-methylaminomethyl-2-thiouridine (mnm(5)s(2)U) in tRNA. Interacts with IscS and stimulates its cysteine desulfurase activity. Accepts an activated sulfur from IscS, which is then transferred to TusD, and thus determines the direction of sulfur flow from IscS to 2-thiouridine formation. Also appears to be involved in sulfur transfer for the biosynthesis of molybdopterin. This is Sulfur carrier protein TusA from Shigella boydii serotype 18 (strain CDC 3083-94 / BS512).